Reading from the N-terminus, the 251-residue chain is MKKTGYFLLAVIVIVAAAGVGYWKFSGNPDALREIVLEQCLPDQLQHQNPAPCAEVKPRAGYVVFKDRHGPLQYLLMPTYRINGTESPLLLEPATPNFFWLAWQARGYMSKKYGHDIPDSAVSLAINSRLGRSQDHLHIHISCIRPDVREQLDNDLTRISTRWLPLPGDLMGHEYLARRVTESELAQRSPFMMLAEEVPEARDHMGRYALAVVRQSDGSFVLLATERNLLTFNRASAEEIQDHSCAILSSR.

Residues 5–25 (GYFLLAVIVIVAAAGVGYWKF) form a helical membrane-spanning segment.

Belongs to the Cdh family.

It is found in the cell inner membrane. The enzyme catalyses a CDP-1,2-diacyl-sn-glycerol + H2O = a 1,2-diacyl-sn-glycero-3-phosphate + CMP + 2 H(+). The protein operates within phospholipid metabolism; CDP-diacylglycerol degradation; phosphatidate from CDP-diacylglycerol: step 1/1. This chain is CDP-diacylglycerol pyrophosphatase, found in Salmonella paratyphi A (strain ATCC 9150 / SARB42).